Consider the following 602-residue polypeptide: MNMSHLLQNFANKKIITLVDFYFSQFISKKNSIIMLISACVSFESKNGHIFLPIEYFEKNCFFSISNKQFINKILKCLNKKKINWSLELSEHISCGDGSIITPLVFYKDKIYLYKIWKAEKKILERLYEKNQFDTIDTQQCLNILNNLFSKKKHDLQKIAVILTLINNIIFITGGPGTGKTTIILKIIIALIKNAKKKIKIQLSAPTGKATENLIEILNDKWLNRYLLKEEKKQFSFNPIMTIHQLLGISKKSEKIFFNKNNLLMIDILIIDEASMIDILMMSNILSALSKKTKIIFIGDHNQLKPVKSSSILKYICSYAEDGYSLKTQSILQEITQNSIINYKINKKNTSYISDKICVLKKSYRFEKKTGIYILSNAVYNKETKIFEKLFKNSIENVFFYEINSEIEYKKMINIIINNNKIFWRKIYEKKNIKEIIKTFKNHQILCIVKNGFFGVNFINKILEEEMYKRNIFNKRFYINNKLWYIGKPIIITENNQCLGIFNGEIGITNLSQKNTLQVSFLKKDNFIENIPIEILKNYKTSWSITVHKAQGSEFNNISLILPNKNLKILKKDILYTGITRTRKQLNIFSTKEIFIKTVLKN.

Residue 174–181 participates in ATP binding; that stretch reads GGPGTGKT.

It belongs to the RecD family. As to quaternary structure, heterotrimer of RecB, RecC and RecD. All subunits contribute to DNA-binding.

The enzyme catalyses Couples ATP hydrolysis with the unwinding of duplex DNA at the replication fork by translocating in the 5'-3' direction. This creates two antiparallel DNA single strands (ssDNA). The leading ssDNA polymer is the template for DNA polymerase III holoenzyme which synthesizes a continuous strand.. It catalyses the reaction ATP + H2O = ADP + phosphate + H(+). A helicase/nuclease that prepares dsDNA breaks (DSB) for recombinational DNA repair. Binds to DSBs and unwinds DNA via a highly rapid and processive ATP-dependent bidirectional helicase activity. Unwinds dsDNA until it encounters a Chi (crossover hotspot instigator) sequence from the 3' direction. Cuts ssDNA a few nucleotides 3' to the Chi site. The properties and activities of the enzyme are changed at Chi. The Chi-altered holoenzyme produces a long 3'-ssDNA overhang and facilitates RecA-binding to the ssDNA for homologous DNA recombination and repair. Holoenzyme degrades any linearized DNA that is unable to undergo homologous recombination. In the holoenzyme this subunit has ssDNA-dependent ATPase and 5'-3' helicase activity. When added to pre-assembled RecBC greatly stimulates nuclease activity and augments holoenzyme processivity. Negatively regulates the RecA-loading ability of RecBCD. This Buchnera aphidicola subsp. Schizaphis graminum (strain Sg) protein is RecBCD enzyme subunit RecD.